A 414-amino-acid chain; its full sequence is Phthiocerol/phthiodiolone dimycocerosyl transferase (414 aa).

Histidine 118 (proton acceptor) is an active-site residue.

It belongs to the acyltransferase PapA5 family. As to quaternary structure, monomer. Interacts directly with the acyl carrier protein (ACP) domain of the mycocerosic acid synthase (mas) protein.

It catalyses the reaction 2 a mycocerosyl-[mycocerosic acid synthase] + a phthiocerol = a dimycocerosyl phthiocerol + 2 holo-[mycocerosic acid synthase].. The catalysed reaction is 2 a mycocerosyl-[mycocerosic acid synthase] + a phthiodiolone = a dimycocerosyl phthiodiolone + 2 holo-[mycocerosic acid synthase].. It carries out the reaction 2 a mycocerosyl-[mycocerosic acid synthase] + a phenolphthiocerol = a dimycocerosyl phenolphthiocerol + 2 holo-[mycocerosic acid synthase].. Functionally, catalyzes diesterification of phthiocerol, phthiodiolone, and phenolphthiocerol with mycocerosic acids, the final step in the phthiocerol, phthiodiolone and phenolphthiocerol dimycocerosate esters (PDIM) synthesis. Can directly transfer the mycocerosate bound to the mycocerosic acid synthase (mas) onto the substrate alcohols. This chain is Phthiocerol/phthiodiolone dimycocerosyl transferase (papA5), found in Mycobacterium ulcerans (strain Agy99).